Here is a 583-residue protein sequence, read N- to C-terminus: DNA ligase (583 aa).

An ATP-binding site is contributed by Glu249. The N6-AMP-lysine intermediate role is filled by Lys251. ATP contacts are provided by Arg256, Arg271, Glu301, Phe341, Arg416, and Lys422.

This sequence belongs to the ATP-dependent DNA ligase family. Requires Mg(2+) as cofactor.

The enzyme catalyses ATP + (deoxyribonucleotide)n-3'-hydroxyl + 5'-phospho-(deoxyribonucleotide)m = (deoxyribonucleotide)n+m + AMP + diphosphate.. In terms of biological role, DNA ligase that seals nicks in double-stranded DNA during DNA replication, DNA recombination and DNA repair. In Pyrobaculum calidifontis (strain DSM 21063 / JCM 11548 / VA1), this protein is DNA ligase.